Reading from the N-terminus, the 425-residue chain is Serine--tRNA ligase (425 aa).

230–232 (TAE) serves as a coordination point for L-serine. An ATP-binding site is contributed by 261 to 263 (RSE). An L-serine-binding site is contributed by Glu-284. Position 348-351 (348-351 (EISS)) interacts with ATP. Ser-384 contributes to the L-serine binding site.

It belongs to the class-II aminoacyl-tRNA synthetase family. Type-1 seryl-tRNA synthetase subfamily. In terms of assembly, homodimer. The tRNA molecule binds across the dimer.

Its subcellular location is the cytoplasm. It catalyses the reaction tRNA(Ser) + L-serine + ATP = L-seryl-tRNA(Ser) + AMP + diphosphate + H(+). The catalysed reaction is tRNA(Sec) + L-serine + ATP = L-seryl-tRNA(Sec) + AMP + diphosphate + H(+). It participates in aminoacyl-tRNA biosynthesis; selenocysteinyl-tRNA(Sec) biosynthesis; L-seryl-tRNA(Sec) from L-serine and tRNA(Sec): step 1/1. Functionally, catalyzes the attachment of serine to tRNA(Ser). Is also able to aminoacylate tRNA(Sec) with serine, to form the misacylated tRNA L-seryl-tRNA(Sec), which will be further converted into selenocysteinyl-tRNA(Sec). This Streptococcus pyogenes serotype M2 (strain MGAS10270) protein is Serine--tRNA ligase.